We begin with the raw amino-acid sequence, 201 residues long: 3-isopropylmalate dehydratase small subunit (201 aa).

It belongs to the LeuD family. LeuD type 1 subfamily. Heterodimer of LeuC and LeuD.

It catalyses the reaction (2R,3S)-3-isopropylmalate = (2S)-2-isopropylmalate. It functions in the pathway amino-acid biosynthesis; L-leucine biosynthesis; L-leucine from 3-methyl-2-oxobutanoate: step 2/4. In terms of biological role, catalyzes the isomerization between 2-isopropylmalate and 3-isopropylmalate, via the formation of 2-isopropylmaleate. This chain is 3-isopropylmalate dehydratase small subunit, found in Paracoccus denitrificans (strain Pd 1222).